A 173-amino-acid chain; its full sequence is Ribosome maturation factor RimM (173 aa).

The PRC barrel domain maps to 98–170 (EDEYYWCDLI…RMLITPLEGL (73 aa)).

This sequence belongs to the RimM family. As to quaternary structure, binds ribosomal protein uS19.

The protein localises to the cytoplasm. An accessory protein needed during the final step in the assembly of 30S ribosomal subunit, possibly for assembly of the head region. Essential for efficient processing of 16S rRNA. May be needed both before and after RbfA during the maturation of 16S rRNA. It has affinity for free ribosomal 30S subunits but not for 70S ribosomes. This Pelobacter propionicus (strain DSM 2379 / NBRC 103807 / OttBd1) protein is Ribosome maturation factor RimM.